The primary structure comprises 1675 residues: Clathrin heavy chain 1 (1675 aa).

The residue at position 2 (Ala-2) is an N-acetylalanine. The tract at residues 2-479 (AQILPIRFQE…VDPTLALSVY (478 aa)) is globular terminal domain. 7 WD40-like repeat regions span residues 24–67 (NIGF…RPIS), 68–107 (ADSA…MTDD), 108–149 (VTFW…SSLA), 150–195 (GCQI…QPIE), 196–257 (GHAA…PEAQ), 258–301 (NDFP…ISGE), and 302–330 (TIFV…VCVE). The residue at position 67 (Ser-67) is a Phosphoserine. Residue Thr-105 is modified to Phosphothreonine. Phosphotyrosine is present on Tyr-184. Position 394 is a phosphothreonine (Thr-394). Residues 449–465 (EKWLKEDKLECSEELGD) are binding site for the uncoating ATPase, involved in lattice disassembly. A flexible linker region spans residues 480–523 (LRANVPNKVIQCFAETGQVQKIVLYAKKVGYTPDWIFLLRNVMR). Residues 524–634 (ISPDQGQQFA…RALEHFTDLY (111 aa)) are distal segment. The heavy chain arm stretch occupies residues 524–1675 (ISPDQGQQFA…QPQPGFGYSM (1152 aa)). CHCR repeat units follow at residues 537-683 (VQDE…QICV), 686-828 (ASKY…SEDV), 833-972 (ILVV…PLID), 979-1124 (LSET…VKEA), 1128-1269 (YIKA…FRLA), 1274-1420 (LHIV…LLLN), and 1423-1566 (LMVL…RECF). Tyr-634 carries the phosphotyrosine modification. The segment at 639-1675 (AVVHTHLLNP…QPQPGFGYSM (1037 aa)) is proximal segment. Residue Lys-737 is modified to N6-succinyllysine. An N6-acetyllysine modification is found at Lys-856. Tyr-899 is subject to Phosphotyrosine. Ser-1167 is subject to Phosphoserine. Tyr-1206 is modified (phosphotyrosine). The tract at residues 1213–1522 (AAKLLYNNVS…YLFKGNNRWK (310 aa)) is involved in binding clathrin light chain. Phosphoserine is present on Ser-1229. Lys-1441 carries the N6-acetyllysine; alternate modification. Lys-1441 carries the N6-succinyllysine; alternate modification. Phosphotyrosine is present on residues Tyr-1477 and Tyr-1487. Phosphoserine is present on Ser-1494. Lys-1501 is subject to N6-acetyllysine. Positions 1550–1675 (AEELLQWFLQ…QPQPGFGYSM (126 aa)) are trimerization.

Belongs to the clathrin heavy chain family. In terms of assembly, clathrin triskelions, composed of 3 heavy chains and 3 light chains, are the basic subunits of the clathrin coat. In the presence of light chains, hub assembly is influenced by both the pH and the concentration of calcium. Interacts with HIP1. Interacts with DENND1A, DENND1B and DENND1C. Interacts with ERBB2. Interacts with FKBP6. Interacts with OCRL. Interacts with CKAP5 and TACC3 forming the TACC3/ch-TOG/clathrin complex located at spindle inter-microtubules bridges; the complex implicates clathrin triskelions; TACC3 and CLTC are proposed to form a composite microtubule interaction surface. Plays a role in early autophagosome formation. Interacts with ATG16L1 (via N-terminus). Interacts with RFTN1; the interaction occurs in response to pathogens. Interacts with USP2 isoform 2. Interacts with TMEM106B (via N-terminus). Interacts with DNAJC6; this interaction produces a local change in heavy-chain contacts, creating a detectable global distortion of the clathrin coat and leads to the recruitment of HSPA8.

The protein localises to the cytoplasmic vesicle membrane. Its subcellular location is the membrane. The protein resides in the coated pit. It is found in the melanosome. It localises to the cytoplasm. The protein localises to the cytoskeleton. Its subcellular location is the spindle. Functionally, clathrin is the major protein of the polyhedral coat of coated pits and vesicles. Two different adapter protein complexes link the clathrin lattice either to the plasma membrane or to the trans-Golgi network. Acts as a component of the TACC3/ch-TOG/clathrin complex proposed to contribute to stabilization of kinetochore fibers of the mitotic spindle by acting as inter-microtubule bridge. The TACC3/ch-TOG/clathrin complex is required for the maintenance of kinetochore fiber tension. Plays a role in early autophagosome formation. Interaction with DNAJC6 mediates the recruitment of HSPA8 to the clathrin lattice and creates local destabilization of the lattice promoting uncoating. The protein is Clathrin heavy chain 1 of Mus musculus (Mouse).